An 82-amino-acid chain; its full sequence is Cytochrome b559 subunit alpha (82 aa).

The chain crosses the membrane as a helical span at residues 22–36 (VIHFVTLPSIFLAGF). Histidine 24 is a heme binding site.

It belongs to the PsbE/PsbF family. In terms of assembly, heterodimer of an alpha subunit and a beta subunit. PSII is composed of 1 copy each of membrane proteins PsbA, PsbB, PsbC, PsbD, PsbE, PsbF, PsbH, PsbI, PsbJ, PsbK, PsbL, PsbM, PsbT, PsbX, PsbY, PsbZ, Psb30/Ycf12, peripheral proteins PsbO, CyanoQ (PsbQ), PsbU, PsbV and a large number of cofactors. It forms dimeric complexes. Heme b serves as cofactor.

It is found in the cellular thylakoid membrane. In terms of biological role, this b-type cytochrome is tightly associated with the reaction center of photosystem II (PSII). PSII is a light-driven water:plastoquinone oxidoreductase that uses light energy to abstract electrons from H(2)O, generating O(2) and a proton gradient subsequently used for ATP formation. It consists of a core antenna complex that captures photons, and an electron transfer chain that converts photonic excitation into a charge separation. The protein is Cytochrome b559 subunit alpha of Parasynechococcus marenigrum (strain WH8102).